The chain runs to 483 residues: UDP-N-acetylmuramate--L-alanine ligase (483 aa).

122 to 128 (GSHGKTT) lines the ATP pocket.

It belongs to the MurCDEF family.

The protein resides in the cytoplasm. The catalysed reaction is UDP-N-acetyl-alpha-D-muramate + L-alanine + ATP = UDP-N-acetyl-alpha-D-muramoyl-L-alanine + ADP + phosphate + H(+). The protein operates within cell wall biogenesis; peptidoglycan biosynthesis. Functionally, cell wall formation. This chain is UDP-N-acetylmuramate--L-alanine ligase, found in Synechococcus sp. (strain CC9311).